A 227-amino-acid polypeptide reads, in one-letter code: Thymidine kinase (227 aa).

ATP-binding positions include 15 to 22 (GSMFSGKT) and 87 to 90 (DEAQ). The active-site Proton acceptor is glutamate 88. Positions 144, 147, 176, and 179 each coordinate Zn(2+). The tract at residues 198–227 (RAVATDDADASTNEADPEAADAASADGTAA) is disordered. Residues 217 to 227 (ADAASADGTAA) show a composition bias toward low complexity.

It belongs to the thymidine kinase family. As to quaternary structure, homotetramer.

The protein resides in the cytoplasm. It catalyses the reaction thymidine + ATP = dTMP + ADP + H(+). This Salinibacter ruber (strain DSM 13855 / M31) protein is Thymidine kinase.